A 686-amino-acid polypeptide reads, in one-letter code: Potassium-transporting ATPase ATP-binding subunit (686 aa).

The next 2 helical transmembrane spans lie at 38 to 58 (VMFV…KDLV) and 64 to 84 (AAPL…VLFA). The disordered stretch occupies residues 101 to 123 (ALRKMRKETTARRWKDGREERVP). Residues 107–123 (KETTARRWKDGREERVP) show a composition bias toward basic and acidic residues. Transmembrane regions (helical) follow at residues 224 to 244 (ILLV…VPLA) and 257 to 277 (VALL…AIGI). Aspartate 308 functions as the 4-aspartylphosphate intermediate in the catalytic mechanism. ATP contacts are provided by residues aspartate 345, glutamate 349, 378–385 (FTAQTRMS), and lysine 399. The Mg(2+) site is built by aspartate 522 and aspartate 526. A run of 3 helical transmembrane segments spans residues 592–612 (FAIL…LNVM), 620–640 (AVLS…PLAL), and 666–686 (VIVP…VGLA).

This sequence belongs to the cation transport ATPase (P-type) (TC 3.A.3) family. Type IA subfamily. As to quaternary structure, the system is composed of three essential subunits: KdpA, KdpB and KdpC.

It localises to the cell membrane. It carries out the reaction K(+)(out) + ATP + H2O = K(+)(in) + ADP + phosphate + H(+). Functionally, part of the high-affinity ATP-driven potassium transport (or Kdp) system, which catalyzes the hydrolysis of ATP coupled with the electrogenic transport of potassium into the cytoplasm. This subunit is responsible for energy coupling to the transport system and for the release of the potassium ions to the cytoplasm. The chain is Potassium-transporting ATPase ATP-binding subunit from Myxococcus xanthus.